The sequence spans 471 residues: Threonine--tRNA ligase catalytic subunit (471 aa).

The segment at 8–333 is catalytic; it reads THIDYAYELD…YLEHRRGRMP (326 aa). Residues cysteine 112, histidine 166, and histidine 310 each coordinate Zn(2+).

Belongs to the class-II aminoacyl-tRNA synthetase family. As to quaternary structure, homodimer. Probably interacts with its editing subunit. Requires Zn(2+) as cofactor.

It localises to the cytoplasm. The enzyme catalyses tRNA(Thr) + L-threonine + ATP = L-threonyl-tRNA(Thr) + AMP + diphosphate + H(+). Catalyzes the attachment of threonine to tRNA(Thr) in a two-step reaction: L-threonine is first activated by ATP to form Thr-AMP and then transferred to the acceptor end of tRNA(Thr). This protein is probably not able to deacylate mischarged L-seryl-tRNA(Thr) as it lacks the appropriate domain. The protein is Threonine--tRNA ligase catalytic subunit of Aeropyrum pernix (strain ATCC 700893 / DSM 11879 / JCM 9820 / NBRC 100138 / K1).